Reading from the N-terminus, the 76-residue chain is Large ribosomal subunit protein bL31 (76 aa).

Zn(2+) contacts are provided by C16, C18, C37, and C40.

It belongs to the bacterial ribosomal protein bL31 family. Type A subfamily. In terms of assembly, part of the 50S ribosomal subunit. Zn(2+) serves as cofactor.

In terms of biological role, binds the 23S rRNA. The sequence is that of Large ribosomal subunit protein bL31 from Solibacter usitatus (strain Ellin6076).